A 405-amino-acid polypeptide reads, in one-letter code: 1-deoxy-D-xylulose 5-phosphate reductoisomerase (405 aa).

T16, G17, S18, I19, G42, R43, N44, and N130 together coordinate NADPH. K131 is a binding site for 1-deoxy-D-xylulose 5-phosphate. NADPH is bound at residue E132. Residue D156 coordinates Mn(2+). Residues S157, E158, S192, and H215 each contribute to the 1-deoxy-D-xylulose 5-phosphate site. Residue E158 participates in Mn(2+) binding. G221 provides a ligand contact to NADPH. 1-deoxy-D-xylulose 5-phosphate contacts are provided by S228, N233, K234, and E237. Position 237 (E237) interacts with Mn(2+).

The protein belongs to the DXR family. It depends on Mg(2+) as a cofactor. Requires Mn(2+) as cofactor.

The enzyme catalyses 2-C-methyl-D-erythritol 4-phosphate + NADP(+) = 1-deoxy-D-xylulose 5-phosphate + NADPH + H(+). Its pathway is isoprenoid biosynthesis; isopentenyl diphosphate biosynthesis via DXP pathway; isopentenyl diphosphate from 1-deoxy-D-xylulose 5-phosphate: step 1/6. Catalyzes the NADPH-dependent rearrangement and reduction of 1-deoxy-D-xylulose-5-phosphate (DXP) to 2-C-methyl-D-erythritol 4-phosphate (MEP). This chain is 1-deoxy-D-xylulose 5-phosphate reductoisomerase, found in Pasteurella multocida (strain Pm70).